We begin with the raw amino-acid sequence, 321 residues long: Glucokinase (321 aa).

Position 8 to 13 (8 to 13) interacts with ATP; that stretch reads ADIGGT.

The protein belongs to the bacterial glucokinase family.

The protein localises to the cytoplasm. The catalysed reaction is D-glucose + ATP = D-glucose 6-phosphate + ADP + H(+). The sequence is that of Glucokinase from Paramagnetospirillum magneticum (strain ATCC 700264 / AMB-1) (Magnetospirillum magneticum).